We begin with the raw amino-acid sequence, 491 residues long: MTSATTVKTEYEAIIGLETHCQLSTNTKIFSSSSTAFGADPNTNIDPVCMGLPGVLPVLNEKVLEYAVKAGLALNCQIAKYSKFDRKQYFYPDLPKNYQISQYDLPIAEHGWLEIELLDADGNPKRKRIGITRLHMEEDAGKLVHAGSDRISGSTYSLVDYNRAGVPLVEIVSEPDIRTGQEAAEYAQELRRVMRYLGVSDGNMQEGSLRCDVNISVRPVGQEKFGTKVEIKNMNSFSAIQKAIEHEIERQIEAIESGEKIIQETRLWEEGSQRTISMRIKEGSSDYRYFPEPDLAPIEVTEAQLSQWRSELPELPAQKRHRYENELGLSAYDTRVLTEDVIVSQYFEVAIASGANPKAAANWITQDIAAYLNKQKLSITEIGLTPANLADVITRIETGKISNAQAKQKLPELLTGLSPEKAFAGQELISDPSVLEPIVDEVIAANPKELEKYRNGNINLKGFFVGQVLKKTNKRADPKLTNELVENKLNG.

This sequence belongs to the GatB/GatE family. GatB subfamily. In terms of assembly, heterotrimer of A, B and C subunits.

It carries out the reaction L-glutamyl-tRNA(Gln) + L-glutamine + ATP + H2O = L-glutaminyl-tRNA(Gln) + L-glutamate + ADP + phosphate + H(+). It catalyses the reaction L-aspartyl-tRNA(Asn) + L-glutamine + ATP + H2O = L-asparaginyl-tRNA(Asn) + L-glutamate + ADP + phosphate + 2 H(+). In terms of biological role, allows the formation of correctly charged Asn-tRNA(Asn) or Gln-tRNA(Gln) through the transamidation of misacylated Asp-tRNA(Asn) or Glu-tRNA(Gln) in organisms which lack either or both of asparaginyl-tRNA or glutaminyl-tRNA synthetases. The reaction takes place in the presence of glutamine and ATP through an activated phospho-Asp-tRNA(Asn) or phospho-Glu-tRNA(Gln). The polypeptide is Aspartyl/glutamyl-tRNA(Asn/Gln) amidotransferase subunit B (Nostoc sp. (strain PCC 7120 / SAG 25.82 / UTEX 2576)).